The following is a 1294-amino-acid chain: uncharacterized protein (1294 aa).

Over 1–375 the chain is Extracellular; sequence MSQQENGDVA…RNFKLNFSDY (375 aa). Positions 28–287 constitute an ABC transporter 1 domain; that stretch reads LHVRDLSIVA…FESIGYHVPQ (260 aa). Residue asparagine 41 is glycosylated (N-linked (GlcNAc...) asparagine). 62 to 69 is a binding site for ATP; the sequence is GGSGSGKT. N-linked (GlcNAc...) asparagine glycosylation is found at asparagine 86, asparagine 101, asparagine 151, asparagine 341, asparagine 349, and asparagine 371. A helical transmembrane segment spans residues 376 to 396; sequence VTLISTFAEPLIIGTVCGWIY. The Cytoplasmic segment spans residues 397-495; it reads YKPDKSSIGG…EADARKFFYQ (99 aa). The chain crosses the membrane as a helical span at residues 496–516; the sequence is FAVVFLCQLSCSGLSMLSVAV. Over 517–530 the chain is Extracellular; the sequence is SRDFSKASLVGNMT. Asparagine 528 carries N-linked (GlcNAc...) asparagine glycosylation. The helical transmembrane segment at 531–551 threads the bilayer; the sequence is FTVLSMGCGFFVNAKVMPVYV. Residues 552–604 lie on the Cytoplasmic side of the membrane; it reads RWIKYIAFTWYSFGTLMSSTFTNSYCTTDNLDECLGNQILEVYGFPRNWITVP. Residues 605 to 625 form a helical membrane-spanning segment; that stretch reads AVVLLCWSVGYFVVGAIILYL. The Extracellular portion of the chain corresponds to 626–1038; the sequence is HKIDITLQNE…TTTRRSFDSL (413 aa). One can recognise an ABC transporter 2 domain in the interval 679–941; sequence IKLEDIDLRV…FTELGYNCPS (263 aa). 727 to 734 lines the ATP pocket; sequence GPSGSGKS. Residue asparagine 983 is glycosylated (N-linked (GlcNAc...) asparagine). Residues 1039–1059 traverse the membrane as a helical segment; it reads MARIAQIPGLGVIFALFFAPV. Residues 1060 to 1120 are Cytoplasmic-facing; sequence KHNYTSISNR…PFFLAYMTLE (61 aa). Residues 1121 to 1141 traverse the membrane as a helical segment; the sequence is LPLSALASVLYAVFTVLACGL. At 1142 to 1266 the chain is on the extracellular side; sequence PRTAGNFFAT…YGLVRNTQKY (125 aa). Residues 1267–1287 traverse the membrane as a helical segment; that stretch reads LGIIVCVAIIYRLIAFFILKA. Topologically, residues 1288–1294 are cytoplasmic; it reads KLEWIKW.

Belongs to the ABC transporter superfamily. ABCG family. PDR (TC 3.A.1.205) subfamily.

The protein localises to the membrane. This is an uncharacterized protein from Saccharomyces cerevisiae (strain ATCC 204508 / S288c) (Baker's yeast).